We begin with the raw amino-acid sequence, 135 residues long: ATP synthase epsilon chain (135 aa).

The tract at residues 84-107 (SLSEEKQSEEQKQRLERAKKALSS) is disordered. Residues 86-102 (SEEKQSEEQKQRLERAK) are compositionally biased toward basic and acidic residues.

Belongs to the ATPase epsilon chain family. In terms of assembly, F-type ATPases have 2 components, CF(1) - the catalytic core - and CF(0) - the membrane proton channel. CF(1) has five subunits: alpha(3), beta(3), gamma(1), delta(1), epsilon(1). CF(0) has three main subunits: a, b and c.

It localises to the cell membrane. In terms of biological role, produces ATP from ADP in the presence of a proton gradient across the membrane. This chain is ATP synthase epsilon chain, found in Elusimicrobium minutum (strain Pei191).